Here is a 1900-residue protein sequence, read N- to C-terminus: Phosphatidylinositol 4-kinase STT4 (1900 aa).

The residue at position 459 (S459) is a Phosphoserine. In terms of domain architecture, PIK helical spans 1345–1530 (KIEGADSNEL…KPTLDRIRER (186 aa)). The tract at residues 1531–1648 (MVSSFSQSHR…EKWQAAIFKV (118 aa)) is pleckstrin homology (PH) domain conferring phosphoinositide binding specificity. Residues 1617–1884 (FMATFKIKKD…LIRKSYESIF (268 aa)) form the PI3K/PI4K catalytic domain. The tract at residues 1623–1629 (IKKDVKD) is G-loop. The tract at residues 1751–1759 (QFKDRHNGN) is catalytic loop. The interval 1770–1794 (HIDFGFIFDIVPGGIKFEAVPFKLT) is activation loop.

The protein belongs to the PI3/PI4-kinase family. Type III PI4K subfamily.

It catalyses the reaction a 1,2-diacyl-sn-glycero-3-phospho-(1D-myo-inositol) + ATP = a 1,2-diacyl-sn-glycero-3-phospho-(1D-myo-inositol 4-phosphate) + ADP + H(+). Its function is as follows. Acts on phosphatidylinositol (PI) in the first committed step in the production of the second messenger inositol 1,4,5,-trisphosphate. STT4 functions in PKC1 protein kinase pathway. This is Phosphatidylinositol 4-kinase STT4 (STT4) from Saccharomyces cerevisiae (strain ATCC 204508 / S288c) (Baker's yeast).